We begin with the raw amino-acid sequence, 287 residues long: ATP synthase gamma chain (287 aa).

This sequence belongs to the ATPase gamma chain family. In terms of assembly, F-type ATPases have 2 components, CF(1) - the catalytic core - and CF(0) - the membrane proton channel. CF(1) has five subunits: alpha(3), beta(3), gamma(1), delta(1), epsilon(1). CF(0) has three main subunits: a, b and c.

It is found in the cell inner membrane. In terms of biological role, produces ATP from ADP in the presence of a proton gradient across the membrane. The gamma chain is believed to be important in regulating ATPase activity and the flow of protons through the CF(0) complex. The sequence is that of ATP synthase gamma chain from Klebsiella pneumoniae (strain 342).